The primary structure comprises 160 residues: Phosphopantetheine adenylyltransferase (160 aa).

Thr-10 serves as a coordination point for substrate. ATP-binding positions include 10-11 (TF) and His-18. Positions 42, 74, and 88 each coordinate substrate. Residues 89–91 (GLR), Glu-99, and 124–130 (NSFISST) each bind ATP.

This sequence belongs to the bacterial CoaD family. In terms of assembly, homohexamer. The cofactor is Mg(2+).

It is found in the cytoplasm. The catalysed reaction is (R)-4'-phosphopantetheine + ATP + H(+) = 3'-dephospho-CoA + diphosphate. Its pathway is cofactor biosynthesis; coenzyme A biosynthesis; CoA from (R)-pantothenate: step 4/5. In terms of biological role, reversibly transfers an adenylyl group from ATP to 4'-phosphopantetheine, yielding dephospho-CoA (dPCoA) and pyrophosphate. The chain is Phosphopantetheine adenylyltransferase from Photobacterium damsela subsp. piscicida (Pasteurella piscicida).